A 471-amino-acid polypeptide reads, in one-letter code: 3-isopropylmalate dehydratase large subunit (471 aa).

Residues Cys-346, Cys-406, and Cys-409 each coordinate [4Fe-4S] cluster.

The protein belongs to the aconitase/IPM isomerase family. LeuC type 1 subfamily. Heterodimer of LeuC and LeuD. It depends on [4Fe-4S] cluster as a cofactor.

The enzyme catalyses (2R,3S)-3-isopropylmalate = (2S)-2-isopropylmalate. It participates in amino-acid biosynthesis; L-leucine biosynthesis; L-leucine from 3-methyl-2-oxobutanoate: step 2/4. In terms of biological role, catalyzes the isomerization between 2-isopropylmalate and 3-isopropylmalate, via the formation of 2-isopropylmaleate. The sequence is that of 3-isopropylmalate dehydratase large subunit from Bacillus pumilus (strain SAFR-032).